Reading from the N-terminus, the 443-residue chain is Thymidine phosphorylase (443 aa).

This sequence belongs to the thymidine/pyrimidine-nucleoside phosphorylase family. Homodimer.

The enzyme catalyses thymidine + phosphate = 2-deoxy-alpha-D-ribose 1-phosphate + thymine. It participates in pyrimidine metabolism; dTMP biosynthesis via salvage pathway; dTMP from thymine: step 1/2. Functionally, the enzymes which catalyze the reversible phosphorolysis of pyrimidine nucleosides are involved in the degradation of these compounds and in their utilization as carbon and energy sources, or in the rescue of pyrimidine bases for nucleotide synthesis. The protein is Thymidine phosphorylase of Aliivibrio fischeri (strain ATCC 700601 / ES114) (Vibrio fischeri).